Consider the following 431-residue polypeptide: STE20-related kinase adapter protein alpha (431 aa).

2 positions are modified to phosphoserine: S2 and S46. Disordered stretches follow at residues 32 to 52 (EQPP…SIAS) and 314 to 344 (PSRS…SHPY). A Protein kinase domain is found at 69–379 (YELLTIIGKG…ASTLLNHSFF (311 aa)). The residue at position 419 (T419) is a Phosphothreonine; by LKB1.

Belongs to the protein kinase superfamily. STE Ser/Thr protein kinase family. STE20 subfamily. As to quaternary structure, component of a trimeric complex composed of STK11/LKB1, STRAD (STRADA or STRADB) and CAB39/MO25 (CAB39/MO25alpha or CAB39L/MO25beta): the complex tethers STK11/LKB1 in the cytoplasm and stimulates its catalytic activity.

It localises to the nucleus. Its subcellular location is the cytoplasm. In terms of biological role, pseudokinase which, in complex with CAB39/MO25 (CAB39/MO25alpha or CAB39L/MO25beta), binds to and activates STK11/LKB1. Adopts a closed conformation typical of active protein kinases and binds STK11/LKB1 as a pseudosubstrate, promoting conformational change of STK11/LKB1 in an active conformation. The polypeptide is STE20-related kinase adapter protein alpha (Strada) (Mus musculus (Mouse)).